A 124-amino-acid chain; its full sequence is 14 kDa phosphohistidine phosphatase (124 aa).

Lys-20 serves as a coordination point for substrate. His-52 (proton acceptor) is an active-site residue. Position 93–95 (93–95 (SMG)) interacts with substrate.

The protein belongs to the janus family. In terms of assembly, monomer.

The protein resides in the cytoplasm. It carries out the reaction N(pros)-phospho-L-histidyl-[protein] + H2O = L-histidyl-[protein] + phosphate. The enzyme catalyses N(tele)-phospho-L-histidyl-[protein] + H2O = L-histidyl-[protein] + phosphate. Exhibits phosphohistidine phosphatase activity. This is 14 kDa phosphohistidine phosphatase (Phpt1) from Mus musculus (Mouse).